Reading from the N-terminus, the 797-residue chain is Glycoprotein gp2 (797 aa).

The first 25 residues, Met1–Thr25, serve as a signal peptide directing secretion. Disordered regions lie at residues Thr24 to Ala188 and Ala212 to Pro549. The segment covering Ala212 to Thr373 has biased composition (low complexity). The segment covering Ala374–Phe394 has biased composition (polar residues). Low complexity-rich tracts occupy residues Thr395–Thr430 and Thr445–Pro457. Residues Phe466–Ala492 are compositionally biased toward polar residues. Basic residues predominate over residues His495 to Gly505. An N-linked (GlcNAc...) asparagine; by host glycan is attached at Asn590. The chain crosses the membrane as a helical span at residues Phe766–Thr790.

The protein resides in the virion membrane. Its function is as follows. Virulence factor. This is Glycoprotein gp2 (EUs4) from Equine herpesvirus 1 (strain Ab4p) (EHV-1).